The following is a 380-amino-acid chain: Transmembrane protein 229A (380 aa).

Residues 1–40 are disordered; that stretch reads MAGSDVDSEGPARRGGAARRPGAPGGPGSEAAAGCPEPLS. 2 helical membrane-spanning segments follow: residues 51-71 and 117-137; these read LPAW…DVLV and AFVF…TLAG. The tract at residues 188-236 is disordered; sequence RQQQQQQQQQQQQRRGALPVPPGARVPTAAGARRRRPRGPRGAGGAPSQ. A compositionally biased stretch (low complexity) spans 190–202; sequence QQQQQQQQQQQRR. Helical transmembrane passes span 244–264, 278–298, 310–330, and 343–363; these read FLFF…FFNV, LWSF…YFHL, VPIY…GLRT, and LNFM…LSVY.

Belongs to the TMEM229 family.

Its subcellular location is the membrane. The chain is Transmembrane protein 229A (TMEM229A) from Homo sapiens (Human).